We begin with the raw amino-acid sequence, 364 residues long: A-type ATP synthase subunit C (364 aa).

This sequence belongs to the V-ATPase V0D/AC39 subunit family. Has multiple subunits with at least A(3), B(3), C, D, E, F, H, I and proteolipid K(x).

The protein resides in the cell membrane. Component of the A-type ATP synthase that produces ATP from ADP in the presence of a proton gradient across the membrane. The chain is A-type ATP synthase subunit C from Desulfurococcus sp. (strain SY).